The sequence spans 255 residues: Shieldin complex subunit 3 (255 aa).

Residues 33–88 (QDFPTHPLPRFIPWFPYDESKLPLKPERLPPVISEEAAESVKQYLAISEPGVKSQS) are sufficient for interaction with MAD2L2. The interval 116–135 (QTNAAHLDKNSGKEKQHKQR) is disordered.

As to quaternary structure, component of the shieldin complex, consisting of SHLD1, SHLD2, SHLD3 and MAD2L2/REV7. Within the complex, SHLD2 forms a scaffold which interacts with a SHLD3-MAD2L2 subcomplex via its N-terminus, and with SHLD1 via its C-terminus. Interacts with ASTE1.

The protein localises to the chromosome. In terms of biological role, component of the shieldin complex, which plays an important role in repair of DNA double-stranded breaks (DSBs). During G1 and S phase of the cell cycle, the complex functions downstream of TP53BP1 to promote non-homologous end joining (NHEJ) and suppress DNA end resection. Mediates various NHEJ-dependent processes including immunoglobulin class-switch recombination, and fusion of unprotected telomeres. In Mus musculus (Mouse), this protein is Shieldin complex subunit 3.